The sequence spans 95 residues: uncharacterized protein (95 aa).

This is an uncharacterized protein from Vaccinia virus (strain Copenhagen) (VACV).